A 551-amino-acid polypeptide reads, in one-letter code: Putative hydroxymethylpyrimidine/phosphomethylpyrimidine kinase 2 (551 aa).

4-amino-5-hydroxymethyl-2-methylpyrimidine is bound at residue E76.

In the N-terminal section; belongs to the ThiD family. The protein in the C-terminal section; belongs to the thiaminase-2 family.

Its subcellular location is the cytoplasm. The catalysed reaction is 4-amino-5-hydroxymethyl-2-methylpyrimidine + ATP = 4-amino-2-methyl-5-(phosphooxymethyl)pyrimidine + ADP + H(+). The enzyme catalyses 4-amino-2-methyl-5-(phosphooxymethyl)pyrimidine + ATP = 4-amino-2-methyl-5-(diphosphooxymethyl)pyrimidine + ADP. It participates in cofactor biosynthesis; thiamine diphosphate biosynthesis; 4-amino-2-methyl-5-diphosphomethylpyrimidine from 5-amino-1-(5-phospho-D-ribosyl)imidazole: step 2/3. Its pathway is cofactor biosynthesis; thiamine diphosphate biosynthesis; 4-amino-2-methyl-5-diphosphomethylpyrimidine from 5-amino-1-(5-phospho-D-ribosyl)imidazole: step 3/3. Its function is as follows. Catalyzes the phosphorylation of hydroxymethylpyrimidine phosphate (HMP-P) to HMP-PP, and of HMP to HMP-P. This chain is Putative hydroxymethylpyrimidine/phosphomethylpyrimidine kinase 2, found in Schizosaccharomyces pombe (strain 972 / ATCC 24843) (Fission yeast).